We begin with the raw amino-acid sequence, 275 residues long: Hydroxyethylthiazole kinase (275 aa).

Substrate is bound at residue methionine 57. ATP contacts are provided by arginine 132 and serine 178. A substrate-binding site is contributed by glycine 205.

This sequence belongs to the Thz kinase family. It depends on Mg(2+) as a cofactor.

The catalysed reaction is 5-(2-hydroxyethyl)-4-methylthiazole + ATP = 4-methyl-5-(2-phosphooxyethyl)-thiazole + ADP + H(+). Its pathway is cofactor biosynthesis; thiamine diphosphate biosynthesis; 4-methyl-5-(2-phosphoethyl)-thiazole from 5-(2-hydroxyethyl)-4-methylthiazole: step 1/1. Functionally, catalyzes the phosphorylation of the hydroxyl group of 4-methyl-5-beta-hydroxyethylthiazole (THZ). The protein is Hydroxyethylthiazole kinase of Clavibacter sepedonicus (Clavibacter michiganensis subsp. sepedonicus).